A 503-amino-acid chain; its full sequence is Aspartyl/glutamyl-tRNA(Asn/Gln) amidotransferase subunit B (503 aa).

The protein belongs to the GatB/GatE family. GatB subfamily. In terms of assembly, heterotrimer of A, B and C subunits.

It carries out the reaction L-glutamyl-tRNA(Gln) + L-glutamine + ATP + H2O = L-glutaminyl-tRNA(Gln) + L-glutamate + ADP + phosphate + H(+). The catalysed reaction is L-aspartyl-tRNA(Asn) + L-glutamine + ATP + H2O = L-asparaginyl-tRNA(Asn) + L-glutamate + ADP + phosphate + 2 H(+). Allows the formation of correctly charged Asn-tRNA(Asn) or Gln-tRNA(Gln) through the transamidation of misacylated Asp-tRNA(Asn) or Glu-tRNA(Gln) in organisms which lack either or both of asparaginyl-tRNA or glutaminyl-tRNA synthetases. The reaction takes place in the presence of glutamine and ATP through an activated phospho-Asp-tRNA(Asn) or phospho-Glu-tRNA(Gln). The polypeptide is Aspartyl/glutamyl-tRNA(Asn/Gln) amidotransferase subunit B (Rhodococcus jostii (strain RHA1)).